The following is a 637-amino-acid chain: Sodium-dependent phosphate transport protein 2A (637 aa).

The Cytoplasmic segment spans residues 1–103; the sequence is MMSYSERLGG…LAQVGTKLLK (103 aa). 2 positions are modified to phosphoserine: serine 14 and serine 34. Residues 104 to 125 traverse the membrane as a helical segment; it reads VPLMLGFLYLFVCSLDVLSSAF. Residues 126-145 are Extracellular-facing; sequence QLAGGKVAGDIFKDNAILSN. Residues 146 to 163 form a helical membrane-spanning segment; sequence PVAGLVVGILVTVLVQSS. The Cytoplasmic portion of the chain corresponds to 164–216; that stretch reads STSTSIIVSMVSSGLLEVSSAIPIIMGSNIGTSVTNTIVALMQAGDRTDFRRA. Residues 217-236 form a helical membrane-spanning segment; it reads FAGATVHDCFNWLSVLVLLP. 2 disulfide bridges follow: cysteine 225/cysteine 520 and cysteine 306/cysteine 334. The Extracellular segment spans residues 237–345; that stretch reads LEAATGYLHH…HIFVDTGLPD (109 aa). 2 N-linked (GlcNAc...) asparagine glycosylation sites follow: asparagine 298 and asparagine 328. A helical membrane pass occupies residues 346 to 368; sequence LAVGLILLAGSLVVLCTCLILLV. Over 369 to 410 the chain is Cytoplasmic; sequence KMLNSLLKGQVANVIQKVINTDFPAPFTWVTGYFAMVVGASM. Residues 411 to 434 traverse the membrane as a helical segment; it reads TFVVQSSSVFTSAITPLIGLGVIS. The Extracellular portion of the chain corresponds to 435–464; it reads IERAYPLTLGSNIGTTTTAILAALASPREK. The chain crosses the membrane as a helical span at residues 465–485; the sequence is LSSSFQIALCHFFFNISGILL. Over 486-511 the chain is Cytoplasmic; it reads WYPLPCTRLPIRMAKALGKRTAKYRW. At threonine 506 the chain carries Phosphothreonine; by PKC. A helical transmembrane segment spans residues 512–532; it reads FAVLYLLVCFLLLPSLVFGIS. The Extracellular portion of the chain corresponds to 533 to 537; the sequence is MAGWQ. The helical transmembrane segment at 538 to 559 threads the bilayer; that stretch reads AMVGVGTPFGALLAFVVLVNVL. The Cytoplasmic portion of the chain corresponds to 560–637; it reads QSRSPGHLPK…LPAHHNATRL (78 aa). Serine 605 is modified (phosphoserine). Threonine 621 carries the phosphothreonine modification. Serine 623 is subject to Phosphoserine.

Belongs to the SLC34A transporter family. As to quaternary structure, interacts via its C-terminal region with NHERF4. Interacts with NHERF1. Interacts with TMEM174; regulates SLC34A1 internalization by PTH and FGF23. As to expression, kidney.

It is found in the apical cell membrane. The protein localises to the cell membrane. It catalyses the reaction 3 Na(+)(out) + phosphate(out) = 3 Na(+)(in) + phosphate(in). With respect to regulation, transport activity is significantly increased in response to dietary phosphate deprivation. Involved in actively transporting phosphate into cells via Na(+) cotransport in the renal brush border membrane. The cotransport has a Na(+):Pi stoichiometry of 3:1 and is electrogenic. The polypeptide is Sodium-dependent phosphate transport protein 2A (Rattus norvegicus (Rat)).